Here is a 1047-residue protein sequence, read N- to C-terminus: Helicase-like transcription factor CHR27 (1047 aa).

A compositionally biased stretch (low complexity) spans 1–11; it reads MDSAIEISSGS. Disordered stretches follow at residues 1-89, 103-130, and 145-174; these read MDSA…SGSG, RTLP…SGSR, and KRTL…GSRF. Composition is skewed to polar residues over residues 52-88 and 118-128; these read TNQA…SSGS and SGTNNISNASG. Positions 296-597 constitute a Helicase ATP-binding domain; the sequence is ETSSFNCPGG…YSYFRFLRYD (302 aa). 309-316 lines the ATP pocket; it reads DDQGLGKT. Disordered stretches follow at residues 349–407 and 511–533; these read ADDE…TRAF and VGAS…SEPD. Over residues 354 to 368 the composition is skewed to basic and acidic residues; sequence DNAKHESGSHVKPEL. Over residues 370–379 the composition is skewed to polar residues; sequence VSSNSETSVL. The segment covering 385–400 has biased composition (acidic residues); it reads DENDSSDMEKAEDEEA. Basic residues predominate over residues 511–523; it reads VGASKKSKRRGRK. An RING-type; degenerate zinc finger spans residues 751–790; it reads CYECNEPPEKPVVTLCGHIFCYECVLEYITGDENTCPVPR. Polar residues predominate over residues 851 to 868; the sequence is QPDSPNSAQHGQMPSSSR. Residues 851–873 form a disordered region; it reads QPDSPNSAQHGQMPSSSRPYDDD. The 156-residue stretch at 887–1042 folds into the Helicase C-terminal domain; the sequence is SPSQGAVKTI…ATRLTVDDLK (156 aa).

This sequence belongs to the SNF2/RAD54 helicase family. RAD16 subfamily. Interacts with SUVR2. Interacts with itself.

The protein resides in the nucleus. Its function is as follows. Probable helicase-like transcription factor involved in transcriptional gene silencing. Associates with SUVR2 and contributes to transcriptional gene silencing at RNA-directed DNA methylation (RdDM) target loci but also at RdDM-independent target loci. May be involved in nucleosome positioning to form ordered nucleosome arrays on chromatin. Associates with SUVR2 and functions redundantly with FRG2. Required for the efficient methylation of a broad range of RdDM target loci. This is Helicase-like transcription factor CHR27 from Arabidopsis thaliana (Mouse-ear cress).